The following is a 479-amino-acid chain: 6-phosphogluconate dehydrogenase, decarboxylating (479 aa).

Residues 9 to 14 (GLAVMG), 32 to 34 (NRT), 74 to 76 (IQA), and Asn-102 contribute to the NADP(+) site. Substrate is bound by residues Asn-102 and 128 to 130 (SGG). The active-site Proton acceptor is Lys-182. 185–186 (HN) is a binding site for substrate. Glu-189 functions as the Proton donor in the catalytic mechanism. Tyr-190, Lys-259, Arg-286, Arg-446, and His-452 together coordinate substrate.

Belongs to the 6-phosphogluconate dehydrogenase family. In terms of assembly, homodimer.

The enzyme catalyses 6-phospho-D-gluconate + NADP(+) = D-ribulose 5-phosphate + CO2 + NADPH. Its pathway is carbohydrate degradation; pentose phosphate pathway; D-ribulose 5-phosphate from D-glucose 6-phosphate (oxidative stage): step 3/3. Its function is as follows. Catalyzes the oxidative decarboxylation of 6-phosphogluconate to ribulose 5-phosphate and CO(2), with concomitant reduction of NADP to NADPH. This Chlamydia pneumoniae (Chlamydophila pneumoniae) protein is 6-phosphogluconate dehydrogenase, decarboxylating (gnd).